We begin with the raw amino-acid sequence, 214 residues long: Adenylate kinase (214 aa).

Residue 10-15 (GAGKGT) coordinates ATP. The NMP stretch occupies residues 30–59 (STGDMLRAAIKAGTELGKQAKAVIDAGQLV). AMP contacts are provided by residues Thr31, Arg36, 57–59 (QLV), 85–88 (GFPR), and Gln92. The LID stretch occupies residues 122–159 (GRRAHLPSGRTYHVVYNPPKVEGKDDVTGEDLVVRDDD). Residues Arg123 and 132 to 133 (TY) each bind ATP. AMP-binding residues include Arg156 and Arg167. Lys200 is a binding site for ATP.

This sequence belongs to the adenylate kinase family. In terms of assembly, monomer.

The protein localises to the cytoplasm. It catalyses the reaction AMP + ATP = 2 ADP. It participates in purine metabolism; AMP biosynthesis via salvage pathway; AMP from ADP: step 1/1. Functionally, catalyzes the reversible transfer of the terminal phosphate group between ATP and AMP. Plays an important role in cellular energy homeostasis and in adenine nucleotide metabolism. The protein is Adenylate kinase of Vibrio vulnificus (strain YJ016).